A 376-amino-acid polypeptide reads, in one-letter code: WD repeat-containing protein wdr-5.1 (376 aa).

Polar residues predominate over residues 1–24; it reads MDTSENAASAAEQQPTQQIDQLTV. Residues 1–70 are disordered; sequence MDTSENAASA…TPNPNAAGAS (70 aa). A compositionally biased stretch (low complexity) spans 25–53; it reads PNAPDGGSSAPAPSTSPNSISPSNPTGTP. WD repeat units follow at residues 85 to 115, 127 to 157, 169 to 199, 211 to 241, 254 to 284, 296 to 329, and 341 to 373; these read GHTK…KIWN, GHKL…KIFE, GHNN…RIWD, AHSD…RIWD, DENP…KLWD, GHEN…YIWN, and GHTQ…HIWR.

The protein belongs to the WD repeat WDR5/wds family. In terms of assembly, component of the SET2 complex (also known as the SET1/COMPASS complex), which contains at least set-2, swd-2.1, cfp-1, rbbp-5, wdr-5.1, dpy-30 and ash-2. Within the complex, interacts with cfp-1, ash-2, dpy-30 and hda-1. Interacts with histone H3 both unmethylated and methylated at 'Lys-4'. Interacts with jmjd-3.1, ceh-6, sox-2, sem-4 and egl-27. Interacts with set-2. In terms of tissue distribution, enriched in the germline. Detected in all nuclei of the embryo. In larvae, expression is detected in the nuclei of seam cells, somatic gonad precursor cells Z1 and Z4, vulval precursor cells, distal tip cells, hypodermal cells, intestinal and muscle cells. Also detected in the neurons from the ventral nerve cord, head and tail region. Expressed in the head and tail region, intestinal cells, muscle cells, cells of the vulva, spermatheca and sheath cells in adults.

The protein localises to the nucleus. Its function is as follows. Contributes to histone modification. May position the N-terminus of histone H3 for efficient trimethylation at 'Lys-4'. Required for di- and trimethylation, particularly for the trimethylation at 'Lys-4' of histone H3. Not required for demethylation of histone H3 'Lys-27'. H3 'Lys-4' methylation represents a specific tag for epigenetic transcriptional activation, germline establishment, maintenance and function. Implicated in the epigenetic inheritance of lifespan over several generations. Acts in the germline to limit the longevity of the soma, probably by regulating a lipid metabolism pathway that signals from the germline to the intestine, thereby preventing accumulation of mono-unsaturated fatty acids. Required for RNA interference with probable antagonistic role against hpl-2 function. Plays a role in vulval cell fate specification by acting in the synthetic multivulva pathway independent of set-2. Sex determining protein required in the germline to promote the spermatogenesis to oogenesis switch during the late larval stages of development. Acts with the sex determining factor tra-1, and redundantly with wdr-5.2, to regulate fog-3 expression, which in turn determines germ cell fate. Cooperates with jmjd-3.1, egl-27 and unc-3 to ensure robust transdifferentiation of the Y rectal cell to the PDA motor neuron during larval development. This Caenorhabditis elegans protein is WD repeat-containing protein wdr-5.1 (wdr-5.1).